Here is a 360-residue protein sequence, read N- to C-terminus: Peptide chain release factor 1 (360 aa).

The residue at position 235 (Gln-235) is an N5-methylglutamine.

It belongs to the prokaryotic/mitochondrial release factor family. Post-translationally, methylated by PrmC. Methylation increases the termination efficiency of RF1.

It is found in the cytoplasm. Functionally, peptide chain release factor 1 directs the termination of translation in response to the peptide chain termination codons UAG and UAA. This chain is Peptide chain release factor 1, found in Delftia acidovorans (strain DSM 14801 / SPH-1).